We begin with the raw amino-acid sequence, 218 residues long: Adenylate kinase (218 aa).

10 to 15 (GAGKGT) contributes to the ATP binding site. The NMP stretch occupies residues 30–59 (STGDMIRETIKSGSVLGQELKKVLDAGELV). AMP contacts are provided by residues T31, R36, 57-59 (ELV), and Q92. An LID region spans residues 122–159 (GRRIHPASGRTYHTKFNPPKVADKDDVTGEPLITRTDD). ATP contacts are provided by residues R123 and 132–133 (TY). Residues R156 and R167 each contribute to the AMP site. ATP is bound at residue Q202.

This sequence belongs to the adenylate kinase family. Monomer.

Its subcellular location is the cytoplasm. It carries out the reaction AMP + ATP = 2 ADP. Its pathway is purine metabolism; AMP biosynthesis via salvage pathway; AMP from ADP: step 1/1. Its function is as follows. Catalyzes the reversible transfer of the terminal phosphate group between ATP and AMP. Plays an important role in cellular energy homeostasis and in adenine nucleotide metabolism. The polypeptide is Adenylate kinase (Francisella tularensis subsp. holarctica (strain LVS)).